The primary structure comprises 227 residues: D-lyxose/D-mannose isomerase (227 aa).

D-fructose-binding positions include Lys90, 103 to 110 (HFHWRKRE), His171, Glu186, and Asp193. Positions 103, 105, 110, and 171 each coordinate Mn(2+).

The protein belongs to the D-lyxose ketol-isomerase family. In terms of assembly, homodimer; disulfide-linked. Dimerization is facilitated through a disulfide bond between the two monomers of the dimeric enzyme. Mn(2+) is required as a cofactor.

It carries out the reaction D-lyxose = D-xylulose. It catalyses the reaction D-mannose = D-fructose. In terms of biological role, sugar isomerase that catalyzes the reversible isomerization of D-lyxose to D-xylulose, and D-mannose to D-fructose. Shows similar activity toward D-lyxose and D-mannose with a turnover and catalytic efficiency for D-lyxose as a substrate only 1.1- and 1.3-fold higher than those for D-mannose, respectively. Shows weaker activity with L-gulose, D-talose, L-ribose and L-allose. Overexpression enables cell growth on the rare pentose D-lyxose as the sole carbon source. The protein is D-lyxose/D-mannose isomerase of Escherichia coli O157:H7.